The chain runs to 198 residues: MICOS complex subunit Mic26 (198 aa).

The N-terminal stretch at 1–23 (MFKVIQRSVGPASLSLLTFRVYA) is a signal peptide. A glycan (N-linked (GlcNAc...) asparagine) is linked at Asn-63. A helical membrane pass occupies residues 108–128 (PGFFPRLGVIGFAGFVGLLFA).

The protein belongs to the apolipoprotein O/MICOS complex subunit Mic27 family. In terms of assembly, component of the mitochondrial contact site and cristae organizing system (MICOS) complex, composed of at least MICOS10/MIC10, CHCHD3/MIC19, CHCHD6/MIC25, APOOL/MIC27, IMMT/MIC60, APOO/MIC23/MIC26 and MICOS13/MIC13. This complex was also known under the names MINOS or MitOS complex. The MICOS complex associates with mitochondrial outer membrane proteins SAMM50, MTX1 and MTX2 (together described as components of the mitochondrial outer membrane sorting assembly machinery (SAM) complex) and DNAJC11, mitochondrial inner membrane protein TMEM11 and with HSPA9. The MICOS and SAM complexes together with DNAJC11 are part of a large protein complex spanning both membranes termed the mitochondrial intermembrane space bridging (MIB) complex. Interacts with IMMT/MIC60. Interacts with MICOS10/MIC10 and APOOL/MIC27.

It is found in the mitochondrion inner membrane. It localises to the mitochondrion. The protein resides in the endoplasmic reticulum membrane. Its subcellular location is the golgi apparatus membrane. Functionally, component of the MICOS complex, a large protein complex of the mitochondrial inner membrane that plays crucial roles in the maintenance of crista junctions, inner membrane architecture, and formation of contact sites to the outer membrane. Plays a crucial role in crista junction formation and mitochondrial function. Can induce cardiac lipotoxicity by enhancing mitochondrial respiration and fatty acid metabolism in cardiac myoblasts. Promotes cholesterol efflux from macrophage cells. Detected in HDL, LDL and VLDL. Secreted by a microsomal triglyceride transfer protein (MTTP)-dependent mechanism, probably as a VLDL-associated protein that is subsequently transferred to HDL. This is MICOS complex subunit Mic26 (Apoo) from Mus musculus (Mouse).